The primary structure comprises 543 residues: Cytochrome P450 monooxygenase sphH (543 aa).

A run of 2 helical transmembrane segments spans residues 1–21 (MGPI…SVYF) and 32–52 (IATF…YQLF). A heme-binding site is contributed by C487.

The protein belongs to the cytochrome P450 family. Heme serves as cofactor.

The protein localises to the membrane. It catalyses the reaction presphingofungin + 2 reduced [NADPH--hemoprotein reductase] + O2 = sphingofungin B1 + 2 oxidized [NADPH--hemoprotein reductase] + H2O + 2 H(+). The protein operates within secondary metabolite biosynthesis. Cytochrome P450 monooxygenase; part of the gene cluster that mediates the biosynthesis of sphingofungins, bioactive molecules acting as sphingolipid inhibitors via inhibiting serine palmitoyl transferase (SPT). Within the pathway, sphH catalyzes the conversion of presphingofungin into sphingofungin B1 via hydroxylagtion at position C-14. Sphingofungin biosynthesis starts with the PKS sphB that produces an C18 polyketide precursor 3-hydroxyoctadeca-4,10-dienoyl-ACP containing one delta-6 desaturation and one delta-12 desaturation. The aminoacyl transferase sphA uses the sphB product to produce 3-keto-presphingofungin by adding an aminomalonate molecule. SphF then reduces the C-3 ketone of 3-keto-presphingofungin which leads to presphingofungin. The cytochrome P450 monooxygenase sphH converts presphingofungin into sphingofungin B1 which is further converted to sphingofungin B by the dioxygenase sphC. SphC is also able to convert presphingofungin into sphingofungin B2. The acetyltransferase sphE acetylates sphingofungin B to produce sphingofungin C, but can also convert sphingofungin B1 into sphingofungin C1 and sphingofungin B2 into sphingofungin C2. Finally, sphingofungin C can be spontaneously converted into sphingofungin D. The sequence is that of Cytochrome P450 monooxygenase sphH from Aspergillus fumigatus (strain CBS 144.89 / FGSC A1163 / CEA10) (Neosartorya fumigata).